The chain runs to 36 residues: Cytochrome b6-f complex subunit 7 (36 aa).

Residues 5 to 25 (IFFVAGLVFVLTLVGMAIGFG) traverse the membrane as a helical segment.

Belongs to the PetM family. As to quaternary structure, the 4 large subunits of the cytochrome b6-f complex are cytochrome b6, subunit IV (17 kDa polypeptide, PetD), cytochrome f and the Rieske protein, while the 4 small subunits are PetG, PetL, PetM and PetN. The complex functions as a dimer.

It localises to the cell inner membrane. Component of the cytochrome b6-f complex, which mediates electron transfer between photosystem II (PSII) and photosystem I (PSI), cyclic electron flow around PSI, and state transitions. This is Cytochrome b6-f complex subunit 7 from Gloeobacter violaceus (strain ATCC 29082 / PCC 7421).